A 392-amino-acid polypeptide reads, in one-letter code: Ribosomal RNA large subunit methyltransferase G (392 aa).

Belongs to the methyltransferase superfamily. RlmG family.

It localises to the cytoplasm. It catalyses the reaction guanosine(1835) in 23S rRNA + S-adenosyl-L-methionine = N(2)-methylguanosine(1835) in 23S rRNA + S-adenosyl-L-homocysteine + H(+). Its function is as follows. Specifically methylates the guanine in position 1835 (m2G1835) of 23S rRNA. The polypeptide is Ribosomal RNA large subunit methyltransferase G (Shewanella frigidimarina (strain NCIMB 400)).